The following is a 338-amino-acid chain: Aspartate-semialdehyde dehydrogenase (338 aa).

NADP(+)-binding positions include threonine 13–valine 16 and serine 41–serine 42. Arginine 101 lines the phosphate pocket. The active-site Acyl-thioester intermediate is the cysteine 132. Residue glutamine 159 coordinates substrate. Residues serine 162 to glycine 163 and proline 187 contribute to the NADP(+) site. Lysine 216 contacts phosphate. Position 237 (arginine 237) interacts with substrate. Catalysis depends on histidine 244, which acts as the Proton acceptor. Position 317 (asparagine 317) interacts with NADP(+).

This sequence belongs to the aspartate-semialdehyde dehydrogenase family. As to quaternary structure, homodimer.

It carries out the reaction L-aspartate 4-semialdehyde + phosphate + NADP(+) = 4-phospho-L-aspartate + NADPH + H(+). It functions in the pathway amino-acid biosynthesis; L-lysine biosynthesis via DAP pathway; (S)-tetrahydrodipicolinate from L-aspartate: step 2/4. The protein operates within amino-acid biosynthesis; L-methionine biosynthesis via de novo pathway; L-homoserine from L-aspartate: step 2/3. It participates in amino-acid biosynthesis; L-threonine biosynthesis; L-threonine from L-aspartate: step 2/5. Functionally, catalyzes the NADPH-dependent formation of L-aspartate-semialdehyde (L-ASA) by the reductive dephosphorylation of L-aspartyl-4-phosphate. This chain is Aspartate-semialdehyde dehydrogenase, found in Rickettsia conorii (strain ATCC VR-613 / Malish 7).